Reading from the N-terminus, the 218-residue chain is Adenylate kinase (218 aa).

Position 10–15 (10–15) interacts with ATP; the sequence is GAGKGT. The tract at residues 30-59 is NMP; sequence STGNMLRAAVKAGTPLGLEAKKVMDAGGLV. Residues threonine 31, arginine 36, 57-59, 85-88, and glutamine 92 contribute to the AMP site; these read GLV and GFPR. The tract at residues 122–159 is LID; the sequence is GRRVHPASGRSYHVRFNPPKAEGVDDVTGEPLVQRDDD. ATP is bound by residues arginine 123 and 132 to 133; that span reads SY. 2 residues coordinate AMP: arginine 156 and arginine 167. Glycine 203 is a binding site for ATP.

The protein belongs to the adenylate kinase family. As to quaternary structure, monomer.

It is found in the cytoplasm. The catalysed reaction is AMP + ATP = 2 ADP. Its pathway is purine metabolism; AMP biosynthesis via salvage pathway; AMP from ADP: step 1/1. Its function is as follows. Catalyzes the reversible transfer of the terminal phosphate group between ATP and AMP. Plays an important role in cellular energy homeostasis and in adenine nucleotide metabolism. The chain is Adenylate kinase from Bordetella parapertussis (strain 12822 / ATCC BAA-587 / NCTC 13253).